A 204-amino-acid chain; its full sequence is Thiamine-phosphate synthase (204 aa).

Residues 28–32 and Asn-60 each bind 4-amino-2-methyl-5-(diphosphooxymethyl)pyrimidine; that span reads QLRIK. Positions 61 and 80 each coordinate Mg(2+). 4-amino-2-methyl-5-(diphosphooxymethyl)pyrimidine is bound by residues Ser-99 and Lys-128. 2-[(2R,5Z)-2-carboxy-4-methylthiazol-5(2H)-ylidene]ethyl phosphate contacts are provided by residues Gly-157 and 177–178; that span reads VT.

Belongs to the thiamine-phosphate synthase family. Mg(2+) is required as a cofactor.

It catalyses the reaction 2-[(2R,5Z)-2-carboxy-4-methylthiazol-5(2H)-ylidene]ethyl phosphate + 4-amino-2-methyl-5-(diphosphooxymethyl)pyrimidine + 2 H(+) = thiamine phosphate + CO2 + diphosphate. It carries out the reaction 2-(2-carboxy-4-methylthiazol-5-yl)ethyl phosphate + 4-amino-2-methyl-5-(diphosphooxymethyl)pyrimidine + 2 H(+) = thiamine phosphate + CO2 + diphosphate. The catalysed reaction is 4-methyl-5-(2-phosphooxyethyl)-thiazole + 4-amino-2-methyl-5-(diphosphooxymethyl)pyrimidine + H(+) = thiamine phosphate + diphosphate. It participates in cofactor biosynthesis; thiamine diphosphate biosynthesis; thiamine phosphate from 4-amino-2-methyl-5-diphosphomethylpyrimidine and 4-methyl-5-(2-phosphoethyl)-thiazole: step 1/1. Its function is as follows. Condenses 4-methyl-5-(beta-hydroxyethyl)thiazole monophosphate (THZ-P) and 2-methyl-4-amino-5-hydroxymethyl pyrimidine pyrophosphate (HMP-PP) to form thiamine monophosphate (TMP). This Rhizobium etli (strain ATCC 51251 / DSM 11541 / JCM 21823 / NBRC 15573 / CFN 42) protein is Thiamine-phosphate synthase.